Reading from the N-terminus, the 213-residue chain is Imidazole glycerol phosphate synthase subunit HisH (213 aa).

The region spanning S4–P213 is the Glutamine amidotransferase type-1 domain. The active-site Nucleophile is the C83. Residues H193 and E195 contribute to the active site.

As to quaternary structure, heterodimer of HisH and HisF.

It localises to the cytoplasm. The catalysed reaction is 5-[(5-phospho-1-deoxy-D-ribulos-1-ylimino)methylamino]-1-(5-phospho-beta-D-ribosyl)imidazole-4-carboxamide + L-glutamine = D-erythro-1-(imidazol-4-yl)glycerol 3-phosphate + 5-amino-1-(5-phospho-beta-D-ribosyl)imidazole-4-carboxamide + L-glutamate + H(+). It catalyses the reaction L-glutamine + H2O = L-glutamate + NH4(+). It participates in amino-acid biosynthesis; L-histidine biosynthesis; L-histidine from 5-phospho-alpha-D-ribose 1-diphosphate: step 5/9. In terms of biological role, IGPS catalyzes the conversion of PRFAR and glutamine to IGP, AICAR and glutamate. The HisH subunit catalyzes the hydrolysis of glutamine to glutamate and ammonia as part of the synthesis of IGP and AICAR. The resulting ammonia molecule is channeled to the active site of HisF. In Burkholderia pseudomallei (strain K96243), this protein is Imidazole glycerol phosphate synthase subunit HisH.